The following is a 1622-amino-acid chain: Ferredoxin-dependent glutamate synthase 1, chloroplastic/mitochondrial (1622 aa).

A chloroplast and mitochondrion-targeting transit peptide spans 1–105 (MAMQSLSPVP…LEDILSERGA (105 aa)). Residue C106 is the For GATase activity of the active site. The 400-residue stretch at 106–505 (CGVGFIANLD…PGMMIAVDLV (400 aa)) folds into the Glutamine amidotransferase type-2 domain. Residue 1184–1241 (LTETHQTLIANGLRERVILRVDGGLKSGVDVLMAAAMGADEYGFGSLAMIATGCVMAR) coordinates FMN. Positions 1237, 1243, and 1248 each coordinate [3Fe-4S] cluster.

Belongs to the glutamate synthase family. In terms of assembly, interacts with SHM1. The cofactor is [3Fe-4S] cluster. FAD serves as cofactor. FMN is required as a cofactor. As to expression, highly expressed in leaves. High expression in the leaf mesophyll and phloem companion cell-sieve element complex.

It localises to the plastid. Its subcellular location is the chloroplast stroma. It is found in the mitochondrion matrix. It carries out the reaction 2 oxidized [2Fe-2S]-[ferredoxin] + 2 L-glutamate = L-glutamine + 2 reduced [2Fe-2S]-[ferredoxin] + 2-oxoglutarate + 2 H(+). Its pathway is amino-acid biosynthesis; L-glutamate biosynthesis via GLT pathway; L-glutamate from 2-oxoglutarate and L-glutamine (ferredoxin route): step 1/1. It functions in the pathway energy metabolism; nitrogen metabolism. In terms of biological role, involved in glutamate biosynthesis in leaf. Required for the reassimilation of ammonium ions generated during photorespiration. The protein is Ferredoxin-dependent glutamate synthase 1, chloroplastic/mitochondrial of Arabidopsis thaliana (Mouse-ear cress).